Consider the following 923-residue polypeptide: Helicase POLQ-like (923 aa).

The interval M1–I84 is disordered. Low complexity predominate over residues S43 to N55. A Helicase ATP-binding domain is found at D178–N349. L191–T198 contacts ATP. Positions D295 to H298 match the DEAH box motif. In terms of domain architecture, Helicase C-terminal spans G392–I596.

Belongs to the helicase family. SKI2 subfamily.

Its subcellular location is the nucleus. It is found in the chromosome. The enzyme catalyses Couples ATP hydrolysis with the unwinding of duplex DNA by translocating in the 3'-5' direction.. It carries out the reaction ATP + H2O = ADP + phosphate + H(+). Single-stranded 3'-5' DNA helicase that plays a key role in homology-driven double-strand break (DSB) repair. Involved in different DSB repair mechanisms that are guided by annealing of extensive stretches of complementary bases at break ends, such as microhomology-mediated end-joining (MMEJ), single-strand annealing (SSA) or synthesis-dependent strand annealing (SDSA). The protein is Helicase POLQ-like of Caenorhabditis elegans.